Consider the following 499-residue polypeptide: Glycerol kinase (499 aa).

Residue Thr-13 participates in ADP binding. Positions 13, 14, and 15 each coordinate ATP. Thr-13 provides a ligand contact to sn-glycerol 3-phosphate. Arg-17 contacts ADP. Sn-glycerol 3-phosphate is bound by residues Arg-83, Glu-84, Tyr-135, and Asp-245. Glycerol contacts are provided by Arg-83, Glu-84, Tyr-135, Asp-245, and Gln-246. ADP is bound by residues Thr-267 and Gly-310. Residues Thr-267, Gly-310, Gln-314, and Gly-411 each coordinate ATP. Gly-411 and Asn-415 together coordinate ADP.

It belongs to the FGGY kinase family.

The catalysed reaction is glycerol + ATP = sn-glycerol 3-phosphate + ADP + H(+). The protein operates within polyol metabolism; glycerol degradation via glycerol kinase pathway; sn-glycerol 3-phosphate from glycerol: step 1/1. Inhibited by fructose 1,6-bisphosphate (FBP). Functionally, key enzyme in the regulation of glycerol uptake and metabolism. Catalyzes the phosphorylation of glycerol to yield sn-glycerol 3-phosphate. The sequence is that of Glycerol kinase from Xanthomonas axonopodis pv. citri (strain 306).